The chain runs to 601 residues: Potassium voltage-gated channel subfamily A member 5 (601 aa).

The tetramerization domain stretch occupies residues 1–200; that stretch reads MEIALVPLEN…FYQLGDEAME (200 aa). The Cytoplasmic portion of the chain corresponds to 1–236; sequence MEIALVPLEN…LIFEYPESSG (236 aa). Positions 19–93 are disordered; it reads GGEAGTGCSQ…DEEGEGDPAL (75 aa). The span at 65–74 shows a compositional bias: pro residues; it reads RPLPPLPQDP. Lysine 210 is covalently cross-linked (Glycyl lysine isopeptide (Lys-Gly) (interchain with G-Cter in SUMO)). The helical transmembrane segment at 237–258 threads the bilayer; it reads SARGIAIVSVLVILISIITFCL. The Extracellular portion of the chain corresponds to 259–312; that stretch reads ETLPEFRDERELLRHPPVPHQPLGPSRGANGSGPLAPPSGPTVAPLLPRTLADP. Residues 275–297 are disordered; it reads PVPHQPLGPSRGANGSGPLAPPS. A glycan (N-linked (GlcNAc...) asparagine) is linked at asparagine 288. A helical transmembrane segment spans residues 313-334; that stretch reads FFIVETTCVIWFTFELLVRFFA. Cysteine 335 is lipidated: S-palmitoyl cysteine. The Cytoplasmic segment spans residues 335 to 345; the sequence is CPSKAEFSRNI. Residues 346–366 form a helical membrane-spanning segment; it reads MNIIDVVAIFPYFITLGTELA. Residues 367–383 lie on the Extracellular side of the membrane; sequence EQPGGGGGGQNGQQAMS. A helical; Voltage-sensor membrane pass occupies residues 384–404; that stretch reads LAILRVIRLVRVFRIFKLSRH. At 405–419 the chain is on the cytoplasmic side; that stretch reads SKGLQILGKTLQASM. The segment at 406–419 is S4-S5 linker; sequence KGLQILGKTLQASM. Residues 420–441 traverse the membrane as a helical segment; the sequence is RELGLLIFFLFIGVILFSSAVY. At 442–455 the chain is on the extracellular side; that stretch reads FAEADNQETHFSSI. Positions 456 to 467 form an intramembrane region, helical; it reads PDAFWWAVVTMT. The Selectivity filter motif lies at 468-473; that stretch reads TVGYGD. Residues 468–475 lie within the membrane without spanning it; that stretch reads TVGYGDMR. At 476–482 the chain is on the extracellular side; that stretch reads PVTVGGK. A helical transmembrane segment spans residues 483-511; that stretch reads IVGSLCAIAGVLTIALPVPVIVSNFNYFY. Topologically, residues 512 to 601 are cytoplasmic; that stretch reads HRETDHEEQA…CLDTSRETDL (90 aa). Residues 521 to 545 form a disordered region; the sequence is AALKEEQGSQSHGTGLDSGGPRKAS. Lysine 524 is covalently cross-linked (Glycyl lysine isopeptide (Lys-Gly) (interchain with G-Cter in SUMO)). A PDZ-binding motif is present at residues 599–601; it reads TDL.

It belongs to the potassium channel family. A (Shaker) (TC 1.A.1.2) subfamily. Kv1.5/KCNA5 sub-subfamily. In terms of assembly, homotetramer and heterotetramer of potassium channel proteins. Interacts with DLG1, which enhances channel currents. Forms a ternary complex with DLG1 and CAV3. Interacts with KCNAB1. Interacts with UBE2I. Interacts with XIRP2; the interaction is required for normal action potential configuration in the heart. Post-translationally, glycosylated. Sumoylated on Lys-210, and Lys-524, preferentially with SUMO3. Sumoylation regulates the voltage sensitivity of the channel.

Its subcellular location is the cell membrane. The enzyme catalyses K(+)(in) = K(+)(out). Voltage-gated potassium channel that mediates transmembrane potassium transport in excitable membranes. Forms tetrameric potassium-selective channels through which potassium ions pass in accordance with their electrochemical gradient. The channel alternates between opened and closed conformations in response to the voltage difference across the membrane. Can form functional homotetrameric channels and heterotetrameric channels that contain variable proportions of KCNA1, KCNA2, KCNA4, KCNA5, and possibly other family members as well; channel properties depend on the type of alpha subunits that are part of the channel. Channel properties are modulated by cytoplasmic beta subunits that regulate the subcellular location of the alpha subunits and promote rapid inactivation. Homotetrameric channels display rapid activation and slow inactivation. Required for normal electrical conduction including formation of the infranodal ventricular conduction system and normal action potential configuration, as a result of its interaction with XIRP2. May play a role in regulating the secretion of insulin in normal pancreatic islets. This chain is Potassium voltage-gated channel subfamily A member 5 (KCNA5), found in Mustela putorius furo (European domestic ferret).